The chain runs to 361 residues: tRNA/tmRNA (uracil-C(5))-methyltransferase (361 aa).

S-adenosyl-L-methionine is bound by residues Gln-183, Tyr-211, Asn-216, Glu-232, and Asp-294. Catalysis depends on Cys-319, which acts as the Nucleophile. The Proton acceptor role is filled by Glu-353.

Belongs to the class I-like SAM-binding methyltransferase superfamily. RNA M5U methyltransferase family. TrmA subfamily.

The catalysed reaction is uridine(54) in tRNA + S-adenosyl-L-methionine = 5-methyluridine(54) in tRNA + S-adenosyl-L-homocysteine + H(+). It carries out the reaction uridine(341) in tmRNA + S-adenosyl-L-methionine = 5-methyluridine(341) in tmRNA + S-adenosyl-L-homocysteine + H(+). In terms of biological role, dual-specificity methyltransferase that catalyzes the formation of 5-methyluridine at position 54 (m5U54) in all tRNAs, and that of position 341 (m5U341) in tmRNA (transfer-mRNA). This chain is tRNA/tmRNA (uracil-C(5))-methyltransferase, found in Acinetobacter baumannii (strain ACICU).